Consider the following 154-residue polypeptide: 2S sulfur-rich seed storage protein 2 (154 aa).

The first 22 residues, 1–22 (MAKMSVVAAALLALLVLGQATA), serve as a signal peptide directing secretion. The segment at 29–52 (TTLEEEQEENPRGRSEQQCREQME) is disordered. Positions 37–52 (ENPRGRSEQQCREQME) are enriched in basic and acidic residues. 4 cysteine pairs are disulfide-bonded: C47–C101, C60–C90, C91–C138, and C103–C145. The propeptide occupies 72-76 (PYQNP). Positions 151–154 (TAWL) are excised as a propeptide.

Belongs to the 2S seed storage albumins family. As to quaternary structure, the mature protein consists of a small and a large chain linked by disulfide bonds.

Functionally, this is a 2S seed storage protein. This chain is 2S sulfur-rich seed storage protein 2 (BE2S2), found in Bertholletia excelsa (Brazil nut).